The primary structure comprises 718 residues: Ribonuclease J (718 aa).

The segment at 1 to 130 (MNDSRNRGRK…RGNRGGGRRN (130 aa)) is disordered. Low complexity-rich tracts occupy residues 55-91 (AAQG…NNNR) and 100-118 (SGNA…NRQG). Zn(2+) is bound by residues histidine 220, histidine 222, aspartate 224, histidine 225, histidine 287, and aspartate 309. 510-514 (HTSGH) contacts substrate. Histidine 536 provides a ligand contact to Zn(2+).

Belongs to the metallo-beta-lactamase superfamily. RNA-metabolizing metallo-beta-lactamase-like family. Bacterial RNase J subfamily. In terms of assembly, homodimer, may be a subunit of the RNA degradosome. It depends on Zn(2+) as a cofactor.

Its subcellular location is the cytoplasm. In terms of biological role, an RNase that has 5'-3' exonuclease and possibly endoonuclease activity. Involved in maturation of rRNA and in some organisms also mRNA maturation and/or decay. This is Ribonuclease J from Corynebacterium glutamicum (strain ATCC 13032 / DSM 20300 / JCM 1318 / BCRC 11384 / CCUG 27702 / LMG 3730 / NBRC 12168 / NCIMB 10025 / NRRL B-2784 / 534).